Here is a 302-residue protein sequence, read N- to C-terminus: Phosphoribosylaminoimidazole-succinocarboxamide synthase (302 aa).

The protein belongs to the SAICAR synthetase family.

It catalyses the reaction 5-amino-1-(5-phospho-D-ribosyl)imidazole-4-carboxylate + L-aspartate + ATP = (2S)-2-[5-amino-1-(5-phospho-beta-D-ribosyl)imidazole-4-carboxamido]succinate + ADP + phosphate + 2 H(+). Its pathway is purine metabolism; IMP biosynthesis via de novo pathway; 5-amino-1-(5-phospho-D-ribosyl)imidazole-4-carboxamide from 5-amino-1-(5-phospho-D-ribosyl)imidazole-4-carboxylate: step 1/2. The sequence is that of Phosphoribosylaminoimidazole-succinocarboxamide synthase from Cupriavidus pinatubonensis (strain JMP 134 / LMG 1197) (Cupriavidus necator (strain JMP 134)).